Reading from the N-terminus, the 121-residue chain is Spermidine export protein MdtJ (121 aa).

4 helical membrane-spanning segments follow: residues 1–21 (MYIY…GTLS), 32–52 (GGFI…SFAV), 55–75 (IALG…ITLF), and 82–102 (ESLS…IVLI).

Belongs to the drug/metabolite transporter (DMT) superfamily. Small multidrug resistance (SMR) (TC 2.A.7.1) family. MdtJ subfamily. Forms a complex with MdtI.

The protein resides in the cell inner membrane. Catalyzes the excretion of spermidine. The chain is Spermidine export protein MdtJ from Escherichia coli O127:H6 (strain E2348/69 / EPEC).